The chain runs to 164 residues: MRVLGIDPGSRITGYGIIEKIGNRLVHVDNGAIHTDSHREFALRLHKIYEGLSRVIEEYRPDAMAVEQVFLAHNAQSALKLGQARGAAIVAGVSAGLPVSEYTAMQVKQAVVGYGHARKEQVQQMVKSLLNLPEIAQADASDALAVAVCHANSAVMKSVLRSIR.

Catalysis depends on residues Asp-7, Glu-67, and Asp-139. Mg(2+) contacts are provided by Asp-7, Glu-67, and Asp-139.

Belongs to the RuvC family. In terms of assembly, homodimer which binds Holliday junction (HJ) DNA. The HJ becomes 2-fold symmetrical on binding to RuvC with unstacked arms; it has a different conformation from HJ DNA in complex with RuvA. In the full resolvosome a probable DNA-RuvA(4)-RuvB(12)-RuvC(2) complex forms which resolves the HJ. Requires Mg(2+) as cofactor.

Its subcellular location is the cytoplasm. The catalysed reaction is Endonucleolytic cleavage at a junction such as a reciprocal single-stranded crossover between two homologous DNA duplexes (Holliday junction).. Functionally, the RuvA-RuvB-RuvC complex processes Holliday junction (HJ) DNA during genetic recombination and DNA repair. Endonuclease that resolves HJ intermediates. Cleaves cruciform DNA by making single-stranded nicks across the HJ at symmetrical positions within the homologous arms, yielding a 5'-phosphate and a 3'-hydroxyl group; requires a central core of homology in the junction. The consensus cleavage sequence is 5'-(A/T)TT(C/G)-3'. Cleavage occurs on the 3'-side of the TT dinucleotide at the point of strand exchange. HJ branch migration catalyzed by RuvA-RuvB allows RuvC to scan DNA until it finds its consensus sequence, where it cleaves and resolves the cruciform DNA. The chain is Crossover junction endodeoxyribonuclease RuvC from Geobacter sulfurreducens (strain ATCC 51573 / DSM 12127 / PCA).